We begin with the raw amino-acid sequence, 190 residues long: Elongation factor P-like protein (190 aa).

It belongs to the elongation factor P family.

The protein is Elongation factor P-like protein of Marinomonas sp. (strain MWYL1).